The primary structure comprises 95 residues: CRISPR-associated endoribonuclease Cas2 (95 aa).

Mg(2+) is bound at residue Asp9.

The protein belongs to the CRISPR-associated endoribonuclease Cas2 protein family. As to quaternary structure, homodimer, forms a heterotetramer with a Cas1 homodimer. The cofactor is Mg(2+).

In terms of biological role, CRISPR (clustered regularly interspaced short palindromic repeat), is an adaptive immune system that provides protection against mobile genetic elements (viruses, transposable elements and conjugative plasmids). CRISPR clusters contain sequences complementary to antecedent mobile elements and target invading nucleic acids. CRISPR clusters are transcribed and processed into CRISPR RNA (crRNA). Functions as a ssRNA-specific endoribonuclease. Involved in the integration of spacer DNA into the CRISPR cassette. In Methylorubrum extorquens (strain CM4 / NCIMB 13688) (Methylobacterium extorquens), this protein is CRISPR-associated endoribonuclease Cas2.